We begin with the raw amino-acid sequence, 234 residues long: uncharacterized protein (234 aa).

3 consecutive transmembrane segments (helical) span residues 32–52 (GLRT…VSVL), 62–82 (IPAQ…LKEG), and 106–126 (QGLF…NIAL).

It belongs to the MgtC/SapB family.

The protein localises to the cell membrane. This is an uncharacterized protein from Synechocystis sp. (strain ATCC 27184 / PCC 6803 / Kazusa).